Consider the following 328-residue polypeptide: Biotin synthase (328 aa).

A Radical SAM core domain is found at 51–282 (FNGNHVDLCS…DKIIRYAGGR (232 aa)). [4Fe-4S] cluster-binding residues include Cys-69, Cys-73, and Cys-76. The [2Fe-2S] cluster site is built by Cys-112, Cys-147, Cys-207, and Arg-277.

The protein belongs to the radical SAM superfamily. Biotin synthase family. As to quaternary structure, homodimer. It depends on [4Fe-4S] cluster as a cofactor. [2Fe-2S] cluster serves as cofactor.

It carries out the reaction (4R,5S)-dethiobiotin + (sulfur carrier)-SH + 2 reduced [2Fe-2S]-[ferredoxin] + 2 S-adenosyl-L-methionine = (sulfur carrier)-H + biotin + 2 5'-deoxyadenosine + 2 L-methionine + 2 oxidized [2Fe-2S]-[ferredoxin]. Its pathway is cofactor biosynthesis; biotin biosynthesis; biotin from 7,8-diaminononanoate: step 2/2. Catalyzes the conversion of dethiobiotin (DTB) to biotin by the insertion of a sulfur atom into dethiobiotin via a radical-based mechanism. This is Biotin synthase from Clostridium acetobutylicum (strain ATCC 824 / DSM 792 / JCM 1419 / IAM 19013 / LMG 5710 / NBRC 13948 / NRRL B-527 / VKM B-1787 / 2291 / W).